Here is a 229-residue protein sequence, read N- to C-terminus: Urease accessory protein UreF (229 aa).

The protein belongs to the UreF family. In terms of assembly, ureD, UreF and UreG form a complex that acts as a GTP-hydrolysis-dependent molecular chaperone, activating the urease apoprotein by helping to assemble the nickel containing metallocenter of UreC. The UreE protein probably delivers the nickel.

Its subcellular location is the cytoplasm. Required for maturation of urease via the functional incorporation of the urease nickel metallocenter. This Trichormus variabilis (strain ATCC 29413 / PCC 7937) (Anabaena variabilis) protein is Urease accessory protein UreF.